A 389-amino-acid polypeptide reads, in one-letter code: S-adenosylmethionine synthase (389 aa).

ATP is bound at residue His16. Asp18 lines the Mg(2+) pocket. K(+) is bound at residue Glu44. The L-methionine site is built by Glu57 and Gln100. The tract at residues 100 to 110 is flexible loop; sequence QSPDIAQGVDE. ATP-binding positions include 167–169, 233–234, Asp242, 248–249, Ala265, and Lys269; these read DAK, RF, and RK. Asp242 provides a ligand contact to L-methionine. Lys273 lines the L-methionine pocket.

Belongs to the AdoMet synthase family. Homotetramer; dimer of dimers. Requires Mg(2+) as cofactor. The cofactor is K(+).

Its subcellular location is the cytoplasm. The enzyme catalyses L-methionine + ATP + H2O = S-adenosyl-L-methionine + phosphate + diphosphate. It functions in the pathway amino-acid biosynthesis; S-adenosyl-L-methionine biosynthesis; S-adenosyl-L-methionine from L-methionine: step 1/1. Catalyzes the formation of S-adenosylmethionine (AdoMet) from methionine and ATP. The overall synthetic reaction is composed of two sequential steps, AdoMet formation and the subsequent tripolyphosphate hydrolysis which occurs prior to release of AdoMet from the enzyme. In Acidithiobacillus ferrooxidans (strain ATCC 23270 / DSM 14882 / CIP 104768 / NCIMB 8455) (Ferrobacillus ferrooxidans (strain ATCC 23270)), this protein is S-adenosylmethionine synthase.